A 543-amino-acid polypeptide reads, in one-letter code: Zinc finger protein 280B (543 aa).

An N-acetylmethionine modification is found at M1. Acidic residues predominate over residues 1-10; sequence MEQSCEEEKE. The disordered stretch occupies residues 1 to 23; it reads MEQSCEEEKEPEPQKNIQETKQV. 2 positions are modified to phosphoserine: S68 and S70. The tract at residues 105–138 is disordered; it reads SQLESRSTDSPIIIEPLSKPDYRNSSPQVVPNNS. Low complexity predominate over residues 128-138; it reads NSSPQVVPNNS. Residues K173, K247, and K261 each participate in a glycyl lysine isopeptide (Lys-Gly) (interchain with G-Cter in SUMO2) cross-link. 4 C2H2-type zinc fingers span residues 343-366, 373-396, 432-454, and 460-483; these read TTCQ…ENVH, TVCK…KDHH, LLCP…YRGH, and HQCS…TQCH. The disordered stretch occupies residues 518–543; the sequence is ASITVSTSDSEPSLPRSKSKISKKSH. The span at 534-543 shows a compositional bias: basic residues; that stretch reads SKSKISKKSH.

Its subcellular location is the nucleus. May function as a transcription factor. This Homo sapiens (Human) protein is Zinc finger protein 280B (ZNF280B).